Here is a 437-residue protein sequence, read N- to C-terminus: Major royal jelly protein 6 (437 aa).

The signal sequence occupies residues 1 to 20 (MTNWLLLIVCLSIACQDVTS). N-linked (GlcNAc...) asparagine glycosylation is found at Asn-78, Asn-164, Asn-181, Asn-201, and Asn-324.

The protein belongs to the major royal jelly protein family. In terms of tissue distribution, found in and secreted from the hypopharyngeal glands of the worker honey bee (at protein level); expression peaks at 20 days post eclosion. Expressed in the spermatheca of adult queen bees (at protein level); Expression levels are higher in mated queens than in virgin queens. Expressed at low level in the brains of adult worker bees. Protein abundance does not seem to correlate with transcript abundance.

Its subcellular location is the secreted. In terms of biological role, component of royal jelly, a substance produced in the hypopharyngeal gland containing proteins, free amino acids, fatty acids, sugars and other nutrients, which is fed to developing larvae by worker nurse bees. All larvae are fed some royal jelly (also known as worker jelly) early in their development but it forms the principal source of nutrition for larvae destined to become queen bees. Produced in the spermatheca of adult queen bees, along with other major royal jelly proteins, where it may act as a nutrient supply for sperm stored by mated queens, or be involved in energy metabolism. The chain is Major royal jelly protein 6 from Apis mellifera (Honeybee).